Reading from the N-terminus, the 207-residue chain is MPLPDFRFIRLLPLAALVLTACSVTTPKGPGKSPDSPQWRQHQQDVRNLNQYQTRGAFAYISDQQKVYARFFWQQTGQDRYRLLLTNPLGSTELELNAQPGNVQLVDNKGQRYTSDDAEEMIGKLTGMPIPLNSLRQWILGLPGDATDYKLDDQYRLSEITYSQNGKNWKVVYGGYDTKTQPAMPANMELTDGGQRIKLKMDNWIVK.

An N-terminal signal peptide occupies residues 1–21 (MPLPDFRFIRLLPLAALVLTA). A lipid anchor (N-palmitoyl cysteine) is attached at Cys22. Residue Cys22 is the site of S-diacylglycerol cysteine attachment.

Belongs to the LolB family. As to quaternary structure, monomer.

It is found in the cell outer membrane. Functionally, plays a critical role in the incorporation of lipoproteins in the outer membrane after they are released by the LolA protein. The protein is Outer-membrane lipoprotein LolB of Escherichia coli O6:K15:H31 (strain 536 / UPEC).